Reading from the N-terminus, the 804-residue chain is Probable copper-exporting P-type ATPase (804 aa).

Residues 1–101 (MVKDTYISSA…VEHLSRMKRK (101 aa)) lie on the Cytoplasmic side of the membrane. The HMA 1 domain occupies 16 to 82 (MERTVRVTGM…VIEDLGYGVV (67 aa)). Residues C27 and C30 each coordinate Cu(+). A helical transmembrane segment spans residues 102-122 (LYVAAFAGVLLLFLAHFISLP). Residues 123–128 (YEDFVQ) are Extracellular-facing. The chain crosses the membrane as a helical span at residues 129–149 (LLIALPAIFYSGSSIFKAAFS). Residues 150-159 (ALRRRTLNMD) lie on the Cytoplasmic side of the membrane. A helical transmembrane segment spans residues 160 to 180 (VMYSMGVGAAFLASVLSTAGV). At 181 to 186 (LPREYS) the chain is on the extracellular side. A helical membrane pass occupies residues 187-204 (FYETSVLLLAFLLLGRTL). The Cytoplasmic segment spans residues 205–339 (EARAKSRTGE…PIQRLADKVV (135 aa)). The helical transmembrane segment at 340 to 360 (AYFIPTVLLVAISAFIYWYFI) threads the bilayer. At 361–364 (AHAP) the chain is on the extracellular side. A helical membrane pass occupies residues 365 to 385 (LLFAFTTLIAVLVVACPCAFG). At 386–680 (LATPTALTVG…KIKQNIFWAL (295 aa)) the chain is on the cytoplasmic side. D424 functions as the 4-aspartylphosphate intermediate in the catalytic mechanism. ATP-binding positions include 457 to 462 (ERRSEH) and 490 to 501 (GEGVVADGILVG). Positions 618 and 622 each coordinate Mg(2+). A helical membrane pass occupies residues 681 to 701 (IYNVILIPAAAGLLYPIFGVV). Residues 702 to 704 (FRP) lie on the Extracellular side of the membrane. A helical membrane pass occupies residues 705–725 (EFAGLAMAMSSVSVVANSLLL). Residues 726–804 (RNYVPPIRRG…AAGYQAKLRS (79 aa)) lie on the Cytoplasmic side of the membrane. Residues 740-801 (EKIVLELSGL…AVEAAGYQAK (62 aa)) enclose the HMA 2 domain. C751 and C754 together coordinate Cu(+).

The protein belongs to the cation transport ATPase (P-type) (TC 3.A.3) family. Type IB subfamily. Interacts with CopZ probably in the CopZ Cu(+)-bound form.

It localises to the cell membrane. It carries out the reaction Cu(+)(in) + ATP + H2O = Cu(+)(out) + ADP + phosphate + H(+). With respect to regulation, activated by Cu(+) and Ag(+) and inhibited by vanadate. Activated by CopZ in its Cu(+)-bound form. In terms of biological role, probably involved in copper and silver export. The chain is Probable copper-exporting P-type ATPase (copA) from Archaeoglobus fulgidus (strain ATCC 49558 / DSM 4304 / JCM 9628 / NBRC 100126 / VC-16).